A 155-amino-acid polypeptide reads, in one-letter code: Ribonuclease H (155 aa).

Positions 4-145 constitute an RNase H type-1 domain; that stretch reads ETKVIEIYTD…ADALARKAIT (142 aa). Mg(2+) is bound by residues Asp-13, Glu-51, Asp-73, and Asp-137.

This sequence belongs to the RNase H family. In terms of assembly, monomer. Mg(2+) serves as cofactor.

Its subcellular location is the cytoplasm. The catalysed reaction is Endonucleolytic cleavage to 5'-phosphomonoester.. In terms of biological role, endonuclease that specifically degrades the RNA of RNA-DNA hybrids. The sequence is that of Ribonuclease H from Bartonella bacilliformis (strain ATCC 35685 / KC583 / Herrer 020/F12,63).